The following is a 257-amino-acid chain: Kallikrein-1 (257 aa).

A signal peptide spans 1–18 (MWFLVLCLALSLGGTGRA). Positions 19–24 (PPIQSR) are cleaved as a propeptide — activation peptide. One can recognise a Peptidase S1 domain in the interval 25–254 (IVGGWECSQP…YVKWIEDTIA (230 aa)). Cystine bridges form between C31/C169, C47/C63, C148/C215, C180/C194, and C205/C230. Catalysis depends on H62, which acts as the Charge relay system. S90 carries O-linked (GalNAc...) serine glycosylation. N99 is a glycosylation site (N-linked (GlcNAc...) asparagine). S101 carries O-linked (GalNAc...) serine glycosylation. An N-linked (GlcNAc...) asparagine glycan is attached at N105. D116 serves as the catalytic Charge relay system. N160 carries N-linked (GlcNAc...) asparagine glycosylation. Residue S162 is glycosylated (O-linked (GalNAc...) serine). S209 (charge relay system) is an active-site residue.

It belongs to the peptidase S1 family. Kallikrein subfamily.

The catalysed reaction is Preferential cleavage of Arg-|-Xaa bonds in small molecule substrates. Highly selective action to release kallidin (lysyl-bradykinin) from kininogen involves hydrolysis of Met-|-Xaa or Leu-|-Xaa.. Its function is as follows. Glandular kallikreins cleave Met-Lys and Arg-Ser bonds in kininogen to release Lys-bradykinin. This chain is Kallikrein-1 (KLK1), found in Macaca fascicularis (Crab-eating macaque).